We begin with the raw amino-acid sequence, 551 residues long: Cysteine desulfurase SufS (551 aa).

The N-terminal stretch at Met1–Ser22 is a signal peptide. Lys327 bears the N6-(pyridoxal phosphate)lysine mark. Cys500 acts as the Cysteine persulfide intermediate in catalysis.

This sequence belongs to the class-V pyridoxal-phosphate-dependent aminotransferase family. Csd subfamily. As to quaternary structure, monomer. Interacts with SufE; interaction enhances cysteine desulfurase activity of SufS. Requires pyridoxal 5'-phosphate as cofactor.

The protein localises to the plastid. It localises to the apicoplast. It carries out the reaction (sulfur carrier)-H + L-cysteine = (sulfur carrier)-SH + L-alanine. It participates in cofactor biosynthesis; iron-sulfur cluster biosynthesis. Functionally, catalyzes sulfur activation and mobilization in sulfur mobilization (SUF) pathway for iron-sulfur (Fe-S) cluster biogenesis. Active when in complex with a partner protein SufE. Required for apicoplast maintenance. Plays a role in the development of sporozoites in oocysts in mosquitoes. This Plasmodium vivax protein is Cysteine desulfurase SufS.